We begin with the raw amino-acid sequence, 173 residues long: Shikimate kinase (173 aa).

12 to 17 lines the ATP pocket; that stretch reads GSGKTT. T16 provides a ligand contact to Mg(2+). Positions 34, 58, and 80 each coordinate substrate. R118 contributes to the ATP binding site. R136 is a binding site for substrate.

The protein belongs to the shikimate kinase family. As to quaternary structure, monomer. It depends on Mg(2+) as a cofactor.

The protein resides in the cytoplasm. It carries out the reaction shikimate + ATP = 3-phosphoshikimate + ADP + H(+). The protein operates within metabolic intermediate biosynthesis; chorismate biosynthesis; chorismate from D-erythrose 4-phosphate and phosphoenolpyruvate: step 5/7. Functionally, catalyzes the specific phosphorylation of the 3-hydroxyl group of shikimic acid using ATP as a cosubstrate. This Moorella thermoacetica (strain ATCC 39073 / JCM 9320) protein is Shikimate kinase.